Consider the following 282-residue polypeptide: Pantothenate synthetase (282 aa).

30–37 (MGYLHEGH) lines the ATP pocket. Residue H37 is the Proton donor of the active site. Q61 is a binding site for (R)-pantoate. Q61 is a binding site for beta-alanine. 147-150 (GMKD) is a binding site for ATP. Q153 contacts (R)-pantoate. ATP-binding positions include V176 and 184-187 (KSSR).

Belongs to the pantothenate synthetase family. Homodimer.

The protein localises to the cytoplasm. It catalyses the reaction (R)-pantoate + beta-alanine + ATP = (R)-pantothenate + AMP + diphosphate + H(+). It participates in cofactor biosynthesis; (R)-pantothenate biosynthesis; (R)-pantothenate from (R)-pantoate and beta-alanine: step 1/1. Catalyzes the condensation of pantoate with beta-alanine in an ATP-dependent reaction via a pantoyl-adenylate intermediate. This Bacillus cereus (strain ATCC 10987 / NRS 248) protein is Pantothenate synthetase.